The primary structure comprises 483 residues: Glutamyl-tRNA(Gln) amidotransferase subunit A (483 aa).

Catalysis depends on charge relay system residues lysine 75 and serine 150. The active-site Acyl-ester intermediate is the serine 174.

It belongs to the amidase family. GatA subfamily. In terms of assembly, heterotrimer of A, B and C subunits.

The enzyme catalyses L-glutamyl-tRNA(Gln) + L-glutamine + ATP + H2O = L-glutaminyl-tRNA(Gln) + L-glutamate + ADP + phosphate + H(+). In terms of biological role, allows the formation of correctly charged Gln-tRNA(Gln) through the transamidation of misacylated Glu-tRNA(Gln) in organisms which lack glutaminyl-tRNA synthetase. The reaction takes place in the presence of glutamine and ATP through an activated gamma-phospho-Glu-tRNA(Gln). The protein is Glutamyl-tRNA(Gln) amidotransferase subunit A of Legionella pneumophila (strain Paris).